A 364-amino-acid chain; its full sequence is Isoflavone 4'-O-methyltransferase (364 aa).

Residues 206-209 (VGGG), Asp230, 230-231 (DQ), 250-251 (DM), and Lys264 each bind S-adenosyl-L-methionine. The active-site Proton acceptor is His268.

It belongs to the class I-like SAM-binding methyltransferase superfamily. Cation-independent O-methyltransferase family. COMT subfamily. In terms of assembly, homodimer.

It catalyses the reaction a 4'-hydroxyisoflavone + S-adenosyl-L-methionine = a 4'-methoxyisoflavone + S-adenosyl-L-homocysteine + H(+). It carries out the reaction (2R,3S)-2,4',7-trihydroxyisoflavanone + S-adenosyl-L-methionine = (2R,3S)-2,7-dihydroxy-4'-methoxyisoflavanone + S-adenosyl-L-homocysteine + H(+). Its function is as follows. 2-hydroxyisoflavanone 4'-O-methyltransferase involved in the biosynthesis of the phytoalexin medicarpin. Has also an in vitro (+)-6a-hydroxymaackiain-3-0-methyltransferase activity, converting the pterocarpan 6a-hydroxymaackiain into pisatin. No activity with di- or trihydroxylated isoflavones, including daidzein and genistein, or with (-)-medicarpin and maackiain. The dual activity for either 3- or 4'-O-methylation depends upon substrate availability. The chain is Isoflavone 4'-O-methyltransferase (HI4'OMT) from Medicago truncatula (Barrel medic).